The following is a 387-amino-acid chain: UDP-Gal:alpha-D-GlcNAc-diphosphoundecaprenol alpha-1,3-galactosyltransferase (387 aa).

This sequence belongs to the glycosyltransferase group 1 family. Glycosyltransferase 4 subfamily. The cofactor is Mg(2+). Requires Mn(2+) as cofactor. It depends on Fe(2+) as a cofactor.

The enzyme catalyses N-acetyl-alpha-D-glucosaminyl-di-trans,octa-cis-undecaprenyl diphosphate + UDP-alpha-D-galactose = alpha-D-Gal-(1-&gt;3)-alpha-D-GlcNAc-di-trans,octa-cis-undecaprenyl diphosphate + UDP + H(+). It functions in the pathway bacterial outer membrane biogenesis; LPS O-antigen biosynthesis. Functionally, involved in the biosynthesis of the lipopolysaccharide (LPS) O-antigen region. Catalyzes the transfer of galactose from UDP-galactose to GlcNAc-undecaprenyl diphosphate via an alpha1,3-linkage. Has strict substrate specificity. The polypeptide is UDP-Gal:alpha-D-GlcNAc-diphosphoundecaprenol alpha-1,3-galactosyltransferase (Escherichia coli).